The primary structure comprises 555 residues: HERV-H_2q24.1 provirus ancestral Env polyprotein (555 aa).

Residues 1-35 form the signal peptide; it reads MILAGRAPSNTSTLMKFYSLLLYSLLFSFPFLYHP. The Extracellular segment spans residues 36–515; the sequence is LPLPSYLHHT…WALSNWMSWV (480 aa). N-linked (GlcNAc...) asparagine glycosylation is present at Asn47. Residues 64–67 carry the CXXC motif; sequence CWLC. N-linked (GlcNAc...) asparagine glycans are attached at residues Asn222, Asn265, Asn283, Asn352, and Asn370. Residues 388–408 are fusion peptide; that stretch reads VIPLIPLMVGLGLSASTIALS. The N-linked (GlcNAc...) asparagine glycan is linked to Asn475. Residues 516-536 traverse the membrane as a helical segment; the sequence is LPILSPLIPIFLLLLFGPCIF. The Cytoplasmic segment spans residues 537–555; the sequence is HLVSQFIQNRIQAITNHSI.

It belongs to the gamma type-C retroviral envelope protein family. HERV class-I H env subfamily. As to quaternary structure, the surface (SU) and transmembrane (TM) proteins form a heterodimer. SU and TM are attached by noncovalent interactions or by a labile interchain disulfide bond. Post-translationally, specific enzymatic cleavages in vivo yield the mature SU and TM proteins. Low expression in testis.

The protein resides in the virion. It is found in the cell membrane. Its function is as follows. Retroviral envelope proteins mediate receptor recognition and membrane fusion during early infection. Endogenous envelope proteins may have kept, lost or modified their original function during evolution. This endogenous envelope protein has lost its original fusogenic properties. Functionally, SU mediates receptor recognition. TM anchors the envelope heterodimer to the viral membrane through one transmembrane domain. The other hydrophobic domain, called fusion peptide, mediates fusion of the viral membrane with the target cell membrane. The protein is HERV-H_2q24.1 provirus ancestral Env polyprotein of Homo sapiens (Human).